A 120-amino-acid chain; its full sequence is Large ribosomal subunit protein uL18 (120 aa).

The protein belongs to the universal ribosomal protein uL18 family. Part of the 50S ribosomal subunit; part of the 5S rRNA/L5/L18/L25 subcomplex. Contacts the 5S and 23S rRNAs.

Functionally, this is one of the proteins that bind and probably mediate the attachment of the 5S RNA into the large ribosomal subunit, where it forms part of the central protuberance. In Bordetella bronchiseptica (strain ATCC BAA-588 / NCTC 13252 / RB50) (Alcaligenes bronchisepticus), this protein is Large ribosomal subunit protein uL18.